The chain runs to 120 residues: Protein EPIDERMAL PATTERNING FACTOR 2 (120 aa).

The signal sequence occupies residues 1-25 (MTKFVRKYMFCLVLVFAACSLVVNS). Disulfide bonds link Cys76–Cys107, Cys80–Cys86, Cys83–Cys109, and Cys95–Cys101.

The protein belongs to the plant cysteine rich small secretory peptide family. Epidermal patterning factor subfamily. In terms of assembly, interacts with ERECTA, ERL1 and TMM. In terms of tissue distribution, expressed in leaves, especially by the MMCs and their early descendants cells (stomatal lineage cells) including guard mother cells (GMCs).

The protein resides in the secreted. Controls stomatal patterning. Regulates the number of cells that enter, and remain in, the stomatal lineage by inhibiting protodermal cells from adopting the meristemoid mother cell (MMC) fate in a non-cell-autonomous manner. Mediates stomatal development inhibition. MEPF2: mobile signal controlling stomatal development in a non-cell-autonomous manner. Uses ERECTA as major receptor. Inactivated by cleavage by CRSP (AC Q9LNU1). May act by competing with somatogen (AC Q9SV72) for the same receptor, TMM (AC Q9SSD1). The polypeptide is Protein EPIDERMAL PATTERNING FACTOR 2 (Arabidopsis thaliana (Mouse-ear cress)).